The primary structure comprises 178 residues: Large ribosomal subunit protein uL6 (178 aa).

Belongs to the universal ribosomal protein uL6 family. In terms of assembly, part of the 50S ribosomal subunit.

Functionally, this protein binds to the 23S rRNA, and is important in its secondary structure. It is located near the subunit interface in the base of the L7/L12 stalk, and near the tRNA binding site of the peptidyltransferase center. This Lactococcus lactis subsp. lactis (strain IL1403) (Streptococcus lactis) protein is Large ribosomal subunit protein uL6.